Here is a 340-residue protein sequence, read N- to C-terminus: Guanine nucleotide-binding protein G(I)/G(S)/G(T) subunit beta-3 (340 aa).

WD repeat units lie at residues 53 to 83 (GHLA…IVWD), 95 to 125 (LRSS…SIYN), 141 to 170 (AHTG…ALWD), 182 to 212 (GHTG…KLWD), 224 to 254 (GHES…RLFD), 268 to 298 (SIIC…NVWD), and 310 to 340 (GHDN…KIWN).

This sequence belongs to the WD repeat G protein beta family. As to quaternary structure, g proteins are composed of 3 units, alpha, beta and gamma. Interacts with RASD2.

Functionally, guanine nucleotide-binding proteins (G proteins) are involved as a modulator or transducer in various transmembrane signaling systems. The beta and gamma chains are required for the GTPase activity, for replacement of GDP by GTP, and for G protein-effector interaction. This Mus musculus (Mouse) protein is Guanine nucleotide-binding protein G(I)/G(S)/G(T) subunit beta-3 (Gnb3).